A 252-amino-acid chain; its full sequence is Short-chain dehydrogenase anuI (252 aa).

NADP(+) is bound by residues Leu18, Asp65, Asn92, Tyr171, Lys175, and Thr206. Catalysis depends on Tyr171, which acts as the Proton acceptor. Tyr171 serves as the catalytic Proton donor. The Lowers pKa of active site Tyr role is filled by Lys175.

It belongs to the short-chain dehydrogenases/reductases (SDR) family.

Its function is as follows. Highly reducing polyketide synthase; part of the gene cluster that mediates the biosynthesis of annullatin D, an alkylated aromatic polyketide with a fused dihydrobenzofuran lactone ring system that exhibits potent agonistic activities toward the cannabinoid receptors. AnuI does not seem to play a role within the pathway. The annullatin backbone 2-hydroxymethyl-3-pentylphenol is assembled from one acetyl-CoA starter unit and 5 malonyl-CoA elongation units by cooperation of the highly reducing polyketide synthase anuA, the short-chain dehydrogenase anuB and the oxidoreductase anuC, before being hydroxylated at the C-5 alkyl chain by the cytochrome P450 monooxygenase anuE to form (8S)-annullatin E. The prenyltransferase anuH subsequently installs one isoprenyl group at the benzene ring to form (8S)-annullatin J. Enzymatic or nonenzymatic dihydro-benzofuran ring formation between the prenyl and the phenolic hydroxyl groups in (8S)-annullatin J results in two diastereomers (2S,9S)-annullatin H and compound 12. The intermediate (2S,9S)-annullatin H is then converted to (2S,9S)-annullatin D by the FAD-linked oxidoreductase anuG-catalyzed five-member lactone ring formation. The isomer 12 acts as a substrate for the short-chain dehydrogenase anuF and is oxidized to (2R)-annullatin F, which is subsequently acetylated by an acetyltransferase leading to (2R)-annullatin G formation. The remaining enzymes identified within the cluster, anuD, anuI and anuJ, seem not to be involved in annullatin biosynthesis. The polypeptide is Short-chain dehydrogenase anuI (Penicillium roqueforti (strain FM164)).